Consider the following 380-residue polypeptide: GDP-mannose:cellobiosyl-diphosphopolyprenol alpha-mannosyltransferase (380 aa).

Belongs to the glycosyltransferase group 1 family. Glycosyltransferase 4 subfamily.

The catalysed reaction is beta-D-Glc-(1-&gt;4)-alpha-D-Glc-di-trans,octa-cis-undecaprenyl diphosphate + GDP-alpha-D-mannose = alpha-D-Man-(1-&gt;3)-beta-D-Glc-(1-&gt;4)-alpha-D-Glc-1-di-trans,octa-cis-undecaprenyl diphosphate + GDP + H(+). Involved in the biosynthesis of the exopolysaccharide xanthan, a polymer that is comprised of repeating pentasaccharide units with the structure of a beta-(1,4)-linked D-glucose backbone with trisaccharide side chains composed of mannose-beta-(1,4)-glucuronic acid-beta-(1,2)-mannose attached to alternate glucose residues in the backbone by alpha-(1,3) linkages. Xanthan is involved in pathogenicity but has also been used in a variety of applications as a specialty polymer for commercial applications, including food additives, where they act as viscosifying, stabilizing, emulsifying, or gelling agents. This chain is GDP-mannose:cellobiosyl-diphosphopolyprenol alpha-mannosyltransferase (gumH), found in Xanthomonas campestris.